The primary structure comprises 220 residues: Deoxyribose-phosphate aldolase 1 (220 aa).

Catalysis depends on D89, which acts as the Proton donor/acceptor. The active-site Schiff-base intermediate with acetaldehyde is K151. K180 acts as the Proton donor/acceptor in catalysis.

This sequence belongs to the DeoC/FbaB aldolase family. DeoC type 1 subfamily.

The protein localises to the cytoplasm. It carries out the reaction 2-deoxy-D-ribose 5-phosphate = D-glyceraldehyde 3-phosphate + acetaldehyde. The protein operates within carbohydrate degradation; 2-deoxy-D-ribose 1-phosphate degradation; D-glyceraldehyde 3-phosphate and acetaldehyde from 2-deoxy-alpha-D-ribose 1-phosphate: step 2/2. In terms of biological role, catalyzes a reversible aldol reaction between acetaldehyde and D-glyceraldehyde 3-phosphate to generate 2-deoxy-D-ribose 5-phosphate. The sequence is that of Deoxyribose-phosphate aldolase 1 from Staphylococcus aureus (strain COL).